A 691-amino-acid polypeptide reads, in one-letter code: DNA ligase (691 aa).

Residues 41–45 (DAEYD), 90–91 (SL), and Glu130 contribute to the NAD(+) site. Lys132 functions as the N6-AMP-lysine intermediate in the catalytic mechanism. NAD(+)-binding residues include Arg153, Glu190, Lys307, and Lys331. The Zn(2+) site is built by Cys425, Cys428, Cys443, and Cys449. One can recognise a BRCT domain in the interval 610–691 (APQGVLAGKT…LHQLLEGNTR (82 aa)).

This sequence belongs to the NAD-dependent DNA ligase family. LigA subfamily. Mg(2+) is required as a cofactor. Mn(2+) serves as cofactor.

The catalysed reaction is NAD(+) + (deoxyribonucleotide)n-3'-hydroxyl + 5'-phospho-(deoxyribonucleotide)m = (deoxyribonucleotide)n+m + AMP + beta-nicotinamide D-nucleotide.. Functionally, DNA ligase that catalyzes the formation of phosphodiester linkages between 5'-phosphoryl and 3'-hydroxyl groups in double-stranded DNA using NAD as a coenzyme and as the energy source for the reaction. It is essential for DNA replication and repair of damaged DNA. This is DNA ligase from Burkholderia multivorans (strain ATCC 17616 / 249).